Consider the following 369-residue polypeptide: Methionine import ATP-binding protein MetN 2 (369 aa).

In terms of domain architecture, ABC transporter spans 33 to 270; sequence VRFIGLGKTY…PRHEVTRTLL (238 aa). Residue 67-74 participates in ATP binding; sequence GRSGAGKS.

The protein belongs to the ABC transporter superfamily. Methionine importer (TC 3.A.1.24) family. As to quaternary structure, the complex is composed of two ATP-binding proteins (MetN), two transmembrane proteins (MetI) and a solute-binding protein (MetQ).

It localises to the cell inner membrane. The enzyme catalyses L-methionine(out) + ATP + H2O = L-methionine(in) + ADP + phosphate + H(+). It carries out the reaction D-methionine(out) + ATP + H2O = D-methionine(in) + ADP + phosphate + H(+). In terms of biological role, part of the ABC transporter complex MetNIQ involved in methionine import. Responsible for energy coupling to the transport system. This chain is Methionine import ATP-binding protein MetN 2, found in Pseudomonas putida (strain ATCC 47054 / DSM 6125 / CFBP 8728 / NCIMB 11950 / KT2440).